Here is a 150-residue protein sequence, read N- to C-terminus: MKRNRMEMEFTSCSENEAFARIAVAAFVAQLDPTLEELTDIKTVVSEAVTNAVIHAYGECSEGMMVRVSVEIEDTQVAITVTDRGVGIVDVEQARQPLYTSRPEWERAGMGFSIMEHFMDQVRVRSTPGQGTVVHMIKKLQASRNVAVVN.

It belongs to the anti-sigma-factor family.

The enzyme catalyses L-seryl-[protein] + ATP = O-phospho-L-seryl-[protein] + ADP + H(+). It catalyses the reaction L-threonyl-[protein] + ATP = O-phospho-L-threonyl-[protein] + ADP + H(+). Functionally, binds to sigma F and blocks its ability to form an RNA polymerase holoenzyme (E-sigma F). Phosphorylates SpoIIAA on a serine residue. This phosphorylation may enable SpoIIAA to act as an anti-anti-sigma factor that counteracts SpoIIAB and thus releases sigma F from inhibition. The polypeptide is Anti-sigma F factor (Pasteuria penetrans).